A 762-amino-acid polypeptide reads, in one-letter code: Primary amine oxidase, liver isozyme (762 aa).

An N-terminal signal peptide occupies residues 1–16 (MFIFIFLSLWTLLVMG). A disordered region spans residues 23 to 54 (GSEEGVGKQCHPSLPPRCPSRSPSDQPWTHPD). Asn-136 carries an N-linked (GlcNAc...) asparagine glycan. The cysteines at positions 197 and 198 are disulfide-linked. An N-linked (GlcNAc...) asparagine glycan is attached at Asn-231. Position 383-393 (383-393 (YMDSGFGMGYF)) interacts with substrate. The active-site Proton acceptor is the Asp-385. An intrachain disulfide couples Cys-403 to Cys-429. 467-472 (MLNYDY) provides a ligand contact to substrate. Catalysis depends on Tyr-470, which acts as the Schiff-base intermediate with substrate; via topaquinone. Tyr-470 bears the 2',4',5'-topaquinone mark. 2 residues coordinate Cu cation: His-519 and His-521. Residues Asp-528, Leu-529, Asp-530, Glu-571, Phe-662, and Asn-664 each coordinate Ca(2+). Asn-665 carries N-linked (GlcNAc...) asparagine glycosylation. Ca(2+) contacts are provided by Glu-666, Asp-672, and Leu-673. His-683 serves as a coordination point for Cu cation. Cys-733 and Cys-740 are oxidised to a cystine.

It belongs to the copper/topaquinone oxidase family. In terms of assembly, homodimer; disulfide-linked. It depends on Cu cation as a cofactor. Ca(2+) is required as a cofactor. L-topaquinone serves as cofactor. Topaquinone (TPQ) is generated by copper-dependent autoxidation of a specific tyrosyl residue. Liver.

The protein localises to the secreted. The protein resides in the extracellular space. It carries out the reaction a primary methyl amine + O2 + H2O = an aldehyde + H2O2 + NH4(+). The protein is Primary amine oxidase, liver isozyme of Bos taurus (Bovine).